The sequence spans 951 residues: Glycine dehydrogenase (decarboxylating) 1 (951 aa).

Lys-703 is subject to N6-(pyridoxal phosphate)lysine.

Belongs to the GcvP family. The glycine cleavage system is composed of four proteins: P, T, L and H. Pyridoxal 5'-phosphate is required as a cofactor.

It catalyses the reaction N(6)-[(R)-lipoyl]-L-lysyl-[glycine-cleavage complex H protein] + glycine + H(+) = N(6)-[(R)-S(8)-aminomethyldihydrolipoyl]-L-lysyl-[glycine-cleavage complex H protein] + CO2. Its function is as follows. The glycine cleavage system catalyzes the degradation of glycine. The P protein binds the alpha-amino group of glycine through its pyridoxal phosphate cofactor; CO(2) is released and the remaining methylamine moiety is then transferred to the lipoamide cofactor of the H protein. This chain is Glycine dehydrogenase (decarboxylating) 1 (gcvP1), found in Pseudomonas putida (strain ATCC 47054 / DSM 6125 / CFBP 8728 / NCIMB 11950 / KT2440).